The chain runs to 411 residues: MTAQTPIHVYSEIGKLKKVLLHRPGKEIENLMPDYLERLLFDDIPFLEDAQKEHDAFAQALRDEGVEVLYLETLAAESLVTPEIREAFIDEYLSEANIRGRATKKAIRELLMSIEDNQELIEKTMAGVQKSELPEIPAAEKGLTDLVESSYPFAIDPMPNLYFTRDPFATIGTGVSLNHMFSETRNRETIYGKYIFTHHPIYGGGKVPMVYDRNETTRIEGGDELVLSKDVLAVGISQRTDAASIEKLLVNIFKQNLGFKKVLAFEFANNRKFMHLDTVFTMVDYDKFTIHPEIEGDLRVYSVTYENEELRIVEETGDLAELLAANLGVERVELIRCGGDNLVAAGREQWNDGSNTLTIAPGVVVVYNRNTITNAILESKGLKLIKIHGSELVRGRGGPRCMSMPFEREDI.

Cys-401 functions as the Amidino-cysteine intermediate in the catalytic mechanism.

Belongs to the arginine deiminase family.

It is found in the cytoplasm. The catalysed reaction is L-arginine + H2O = L-citrulline + NH4(+). It functions in the pathway amino-acid degradation; L-arginine degradation via ADI pathway; carbamoyl phosphate from L-arginine: step 1/2. This chain is Arginine deiminase, found in Streptococcus equi subsp. equi (strain 4047).